A 122-amino-acid polypeptide reads, in one-letter code: Large ribosomal subunit protein uL14 (122 aa).

Belongs to the universal ribosomal protein uL14 family. As to quaternary structure, part of the 50S ribosomal subunit. Forms a cluster with proteins L3 and L19. In the 70S ribosome, L14 and L19 interact and together make contacts with the 16S rRNA in bridges B5 and B8.

Its function is as follows. Binds to 23S rRNA. Forms part of two intersubunit bridges in the 70S ribosome. This Solibacter usitatus (strain Ellin6076) protein is Large ribosomal subunit protein uL14.